A 901-amino-acid chain; its full sequence is Protein translocase subunit SecA (901 aa).

ATP is bound by residues glutamine 87, 105–109 (GEGKT), and aspartate 512. The segment at 852-901 (AQMQQLSHQSDDEAAAEDLAAQTGERKVGRNDPCPCGSGKKYKQCHGRLS) is disordered. Positions 885, 887, 896, and 897 each coordinate Zn(2+). The segment covering 891–901 (KKYKQCHGRLS) has biased composition (basic residues).

It belongs to the SecA family. Monomer and homodimer. Part of the essential Sec protein translocation apparatus which comprises SecA, SecYEG and auxiliary proteins SecDF-YajC and YidC. Zn(2+) serves as cofactor.

It is found in the cell inner membrane. Its subcellular location is the cytoplasm. The catalysed reaction is ATP + H2O + cellular proteinSide 1 = ADP + phosphate + cellular proteinSide 2.. Functionally, part of the Sec protein translocase complex. Interacts with the SecYEG preprotein conducting channel. Has a central role in coupling the hydrolysis of ATP to the transfer of proteins into and across the cell membrane, serving both as a receptor for the preprotein-SecB complex and as an ATP-driven molecular motor driving the stepwise translocation of polypeptide chains across the membrane. This is Protein translocase subunit SecA from Klebsiella pneumoniae (strain 342).